The following is a 101-amino-acid chain: Large ribosomal subunit protein bL28 (101 aa).

This sequence belongs to the bacterial ribosomal protein bL28 family.

The sequence is that of Large ribosomal subunit protein bL28 from Rhodopseudomonas palustris (strain ATCC BAA-98 / CGA009).